The following is a 261-amino-acid chain: Transmembrane protein 106A (261 aa).

A disordered region spans residues 1-23; the sequence is MGKAVSQLTSRKDEDKPILPDNP. Residues 93–113 traverse the membrane as a helical segment; the sequence is LFVFLSVAICLLIFSLTIFFL.

This sequence belongs to the TMEM106 family. In terms of tissue distribution, expressed in liver, spleen, lung, kidney, lymph nodes and adipose tissue (at protein level). Expressed by macrophages.

It localises to the cell membrane. Its function is as follows. Activates macrophages and polarizes them into M1-like macrophages through the activation of the MAPK and NF-kappaB signaling pathway. Upon activation, up-regulates the expression of CD80, CD86, CD69 and MHC II on macrophages, and induces the release of pro-inflammatory cytokines such as TNF, IL1B, IL6, CCL2 and nitric oxide. May play a role in inhibition of proliferation and migration. The chain is Transmembrane protein 106A (Tmem106a) from Mus musculus (Mouse).